The sequence spans 644 residues: Transcription factor btd (644 aa).

Disordered regions lie at residues 16–65 (HQAQ…TQQQ) and 101–196 (APPS…AGSP). Low complexity-rich tracts occupy residues 101–119 (APPSLSGSSSGSSSGSSPL) and 140–196 (ASPN…AGSP). 3 consecutive C2H2-type zinc fingers follow at residues 333 to 357 (HICHIPGCERLYGKASHLKTHLRWH), 363 to 385 (FLCLTCGKRFSRSDELQRHGRTH), and 391 to 413 (YACPICSKKFSRSDHLSKHKKTH). 2 disordered regions span residues 437-461 (LEKKEKKSGKPLTPPVEFKQEQPDT) and 478-537 (TSAG…SSSA). Composition is skewed to low complexity over residues 499 to 508 (TTTTSSAAAS) and 521 to 537 (AIQPATTSASSSSSSSA).

The protein resides in the nucleus. Functionally, required for the development of the antennal, intercalary and mandibular segments of the head. This chain is Transcription factor btd (btd), found in Drosophila melanogaster (Fruit fly).